An 833-amino-acid polypeptide reads, in one-letter code: Leucine--tRNA ligase (833 aa).

The 'HIGH' region signature appears at 41 to 52 (PYPSGAGLHVGH). Residues 610–614 (KMSKS) carry the 'KMSKS' region motif. Lysine 613 contacts ATP.

Belongs to the class-I aminoacyl-tRNA synthetase family.

The protein localises to the cytoplasm. The catalysed reaction is tRNA(Leu) + L-leucine + ATP = L-leucyl-tRNA(Leu) + AMP + diphosphate. The protein is Leucine--tRNA ligase of Streptococcus pneumoniae (strain Taiwan19F-14).